Consider the following 435-residue polypeptide: ATP-dependent protease ATPase subunit HslU (435 aa).

ATP-binding positions include Ile18, 60 to 65, Asp248, Glu313, and Arg385; that span reads GVGKTE.

It belongs to the ClpX chaperone family. HslU subfamily. A double ring-shaped homohexamer of HslV is capped on each side by a ring-shaped HslU homohexamer. The assembly of the HslU/HslV complex is dependent on binding of ATP.

The protein resides in the cytoplasm. Functionally, ATPase subunit of a proteasome-like degradation complex; this subunit has chaperone activity. The binding of ATP and its subsequent hydrolysis by HslU are essential for unfolding of protein substrates subsequently hydrolyzed by HslV. HslU recognizes the N-terminal part of its protein substrates and unfolds these before they are guided to HslV for hydrolysis. The sequence is that of ATP-dependent protease ATPase subunit HslU from Rhizobium johnstonii (strain DSM 114642 / LMG 32736 / 3841) (Rhizobium leguminosarum bv. viciae).